A 187-amino-acid polypeptide reads, in one-letter code: Elongation factor P (187 aa).

It belongs to the elongation factor P family.

It is found in the cytoplasm. The protein operates within protein biosynthesis; polypeptide chain elongation. Involved in peptide bond synthesis. Stimulates efficient translation and peptide-bond synthesis on native or reconstituted 70S ribosomes in vitro. Probably functions indirectly by altering the affinity of the ribosome for aminoacyl-tRNA, thus increasing their reactivity as acceptors for peptidyl transferase. In Synechococcus sp. (strain CC9605), this protein is Elongation factor P.